The primary structure comprises 785 residues: MLCGGWKRSRRSPEESRVSAQVAAPLAFPPSPASSDSSTKRPGLRALKKMGLTEDEDVQAMLRGSRLLKIRSRTWHKERLYRLQEDGLSVWFQRRIPRAASKHIFFVQHIEAVREGHQSEGLRRFGGAFAPACCLTIAFKGRRKNLDLAAPTAEEAQRWVRGLAKLRARLDAMSQRERLDHWIHSYLHRADSDQDSKMSFKEIKSLLRMVNVDMNDMYAYRLFKECDHSNNERLEGAEIEAFLRRLLKRPELEEIFRRYSGEDRVLSASELLEFLEDQGEDGATLACAQQLIQTYELNETAKQHELMTLDGFMMYLLSPEGAALNVAHTCVFQDMGQPLAHYFISSSHNTYLTDSQIGGTSSTEAYIRAFAQGCRCVELDCWEGPGGEPVIYHGHTLTSKILFRDVIQAVRDHAFTSSPYPVILSLENHCGLEQQAVMARHLRSILGDMLVTQALDSQNPEELPSPEQLKGRILVKGKKLPAARSEDGRILSDREEEEEEEEEAEEALEAAEQRSRAKQISPELSALAVYCCATRLRTLDPSPGPPQSCTVGSLSERKARKFTREAGTSFVRHNTQQLTRVYPLGLRMNSANYNPQEMWNSGCQLVALNFQTPGYEMDLNTGRFLINGQCGYVLKPAYLRQLNTTFDPECPGPPRTTLAIQVLTAQQLPKLNAEKPSSIVDPLVRVEIHGVPEDCAQKETDYVLNNGFNPCWEQTLQFRLRAPELVLVRFVVEDYDTTSPNDFVGQSTLPLSSLKQGYRHIHLLSKDGASLAPATLFVHIRIQNS.

Positions 1 to 43 are disordered; that stretch reads MLCGGWKRSRRSPEESRVSAQVAAPLAFPPSPASSDSSTKRPG. The PH domain occupies 65–168; it reads SRLLKIRSRT…WVRGLAKLRA (104 aa). The segment at 69–97 is substrate binding; the sequence is KIRSRTWHKERLYRLQEDGLSVWFQRRIP. At Ser101 the chain carries Phosphoserine. 3 consecutive EF-hand domains span residues 178–213, 214–249, and 246–281; these read RLDHWIHSYLHRADSDQDSKMSFKEIKSLLRMVNVD, MNDMYAYRLFKECDHSNNERLEGAEIEAFLRRLLKR, and LLKRPELEEIFRRYSGEDRVLSASELLEFLEDQGED. Positions 191, 193, 195, 197, 202, 227, 229, 231, 233, and 238 each coordinate Ca(2+). The region spanning 333–478 is the PI-PLC X-box domain; it reads QDMGQPLAHY…LKGRILVKGK (146 aa). His348 is an active-site residue. The Ca(2+) site is built by Asn349, Glu378, and Asp380. His393 is a catalytic residue. Glu427 is a binding site for Ca(2+). Residues Lys476 and Lys478 each coordinate substrate. Residues 484 to 493 show a composition bias toward basic and acidic residues; sequence RSEDGRILSD. Positions 484-517 are disordered; that stretch reads RSEDGRILSDREEEEEEEEEAEEALEAAEQRSRA. Ser492 carries the phosphoserine modification. The span at 494–509 shows a compositional bias: acidic residues; that stretch reads REEEEEEEEEAEEALE. Residues 524–640 enclose the PI-PLC Y-box domain; sequence LSALAVYCCA…GYVLKPAYLR (117 aa). A substrate-binding site is contributed by Ser553. Ser569 carries the post-translational modification Phosphoserine. Residue Arg580 participates in substrate binding. The region spanning 636–765 is the C2 domain; it reads PAYLRQLNTT…QGYRHIHLLS (130 aa). Residues Ile679, Asp681, Asn705, Asp734, Tyr735, and Asp736 each contribute to the Ca(2+) site.

Ca(2+) serves as cofactor. Expressed in cerebellum and cerebral cortex.

The protein resides in the membrane. Its subcellular location is the cytoplasm. The protein localises to the cleavage furrow. It carries out the reaction a 1,2-diacyl-sn-glycero-3-phospho-(1D-myo-inositol-4,5-bisphosphate) + H2O = 1D-myo-inositol 1,4,5-trisphosphate + a 1,2-diacyl-sn-glycerol + H(+). Strongly activated by phosphatidic acid. Inhibited by phosphatidylethanolamine (PtdEtn), phosphatidylcholine (PtdCho), sphingomyelin and phosphatidylserine (PtdSer). In terms of biological role, hydrolyzes the phosphatidylinositol 4,5-bisphosphate (PIP2) to generate 2 second messenger molecules diacylglycerol (DAG) and inositol 1,4,5-trisphosphate (IP3). DAG mediates the activation of protein kinase C (PKC), while IP3 releases Ca(2+) from intracellular stores. Essential for trophoblast and placental development. May participate in cytokinesis by hydrolyzing PIP2 at the cleavage furrow. Regulates neurite outgrowth through the inhibition of RhoA/Rho kinase signaling. This Mus musculus (Mouse) protein is 1-phosphatidylinositol 4,5-bisphosphate phosphodiesterase delta-3.